A 546-amino-acid chain; its full sequence is Chaperonin GroEL (546 aa).

Residues 29–32 (TLGP), Lys-50, 86–90 (DGTTT), Gly-415, and Asp-495 contribute to the ATP site. The tract at residues 526–546 (EDNAGGGGMPQGMGGGMPGMM) is disordered. Positions 529–546 (AGGGGMPQGMGGGMPGMM) are enriched in gly residues.

It belongs to the chaperonin (HSP60) family. In terms of assembly, forms a cylinder of 14 subunits composed of two heptameric rings stacked back-to-back. Interacts with the co-chaperonin GroES.

It localises to the cytoplasm. The catalysed reaction is ATP + H2O + a folded polypeptide = ADP + phosphate + an unfolded polypeptide.. Its function is as follows. Together with its co-chaperonin GroES, plays an essential role in assisting protein folding. The GroEL-GroES system forms a nano-cage that allows encapsulation of the non-native substrate proteins and provides a physical environment optimized to promote and accelerate protein folding. This chain is Chaperonin GroEL, found in Christiangramia forsetii (strain DSM 17595 / CGMCC 1.15422 / KT0803) (Gramella forsetii).